Reading from the N-terminus, the 751-residue chain is WD repeat-containing protein 91 (751 aa).

The stretch at 188–212 (IQEENESLRHKLFALQAESSRMKKE) forms a coiled coil. Residues 264 to 395 (LSQSKKGPAR…ASSTESVGVR (132 aa)) form a disordered region. A compositionally biased stretch (polar residues) spans 278–287 (SGASPTQTGS). Over residues 334-346 (RLQEHGKERRELL) the composition is skewed to basic and acidic residues. The segment covering 377–391 (QAETSTKMPASSTES) has biased composition (polar residues). 7 WD repeats span residues 410-449 (EHHSSIMYCRVDCSGRRVASLDVDGVIKVWSFNPIMQTKA), 452-492 (ISKS…NLCE), 497-559 (EDMP…QQLQ), 564-603 (PEPIAINCTAFNHNGNLLVTGAADGIVRLFDMQQHECAMS), 606-645 (AHDGEVYSVEFSYDENTVYSIGEDGKFIQWNIHKSGLKIS), 668-706 (VQFPRGRLFAFDSEGNYMLTCSSTGGVIFKLNGEDKVLE), and 713-751 (GHRAPVVTVDWSTAMDCGTCLTASMDGKIKLTTLLAQKS).

This sequence belongs to the WD repeat WDR91 family.

It is found in the early endosome membrane. The protein resides in the late endosome membrane. Functions as a negative regulator of the PI3 kinase/PI3K activity associated with endosomal membranes. By modifying the phosphatidylinositol 3-phosphate/PtdInsP3 content of endosomal membranes may regulate endosome fusion, recycling, sorting and early to late endosome transport. The sequence is that of WD repeat-containing protein 91 from Gallus gallus (Chicken).